The chain runs to 325 residues: Putative gluconeogenesis factor (325 aa).

Belongs to the gluconeogenesis factor family.

It is found in the cytoplasm. Required for morphogenesis under gluconeogenic growth conditions. The chain is Putative gluconeogenesis factor from Streptococcus pneumoniae serotype 4 (strain ATCC BAA-334 / TIGR4).